A 640-amino-acid chain; its full sequence is Threonine--tRNA ligase (640 aa).

Positions 1–59 constitute a TGS domain; the sequence is MKIKVKLPDGKEKEYDRGITPAEIAKELGVKKAIGAVVNGELWDLKRPIENDCELRLVT. Positions 240–531 are catalytic; that stretch reads DHRKLGPHLE…LIEHFAGAFP (292 aa). Residues C332, H383, and H508 each contribute to the Zn(2+) site.

This sequence belongs to the class-II aminoacyl-tRNA synthetase family. Homodimer. It depends on Zn(2+) as a cofactor.

It localises to the cytoplasm. The enzyme catalyses tRNA(Thr) + L-threonine + ATP = L-threonyl-tRNA(Thr) + AMP + diphosphate + H(+). Functionally, catalyzes the attachment of threonine to tRNA(Thr) in a two-step reaction: L-threonine is first activated by ATP to form Thr-AMP and then transferred to the acceptor end of tRNA(Thr). Also edits incorrectly charged L-seryl-tRNA(Thr). The polypeptide is Threonine--tRNA ligase (Thermotoga sp. (strain RQ2)).